A 213-amino-acid polypeptide reads, in one-letter code: Uridine kinase (213 aa).

14–21 (GASASGKS) contributes to the ATP binding site.

This sequence belongs to the uridine kinase family.

Its subcellular location is the cytoplasm. The enzyme catalyses uridine + ATP = UMP + ADP + H(+). The catalysed reaction is cytidine + ATP = CMP + ADP + H(+). It functions in the pathway pyrimidine metabolism; CTP biosynthesis via salvage pathway; CTP from cytidine: step 1/3. It participates in pyrimidine metabolism; UMP biosynthesis via salvage pathway; UMP from uridine: step 1/1. This chain is Uridine kinase, found in Vibrio campbellii (strain ATCC BAA-1116).